The chain runs to 182 residues: Adenine phosphoribosyltransferase (182 aa).

This sequence belongs to the purine/pyrimidine phosphoribosyltransferase family. In terms of assembly, homodimer.

It is found in the cytoplasm. It catalyses the reaction AMP + diphosphate = 5-phospho-alpha-D-ribose 1-diphosphate + adenine. It participates in purine metabolism; AMP biosynthesis via salvage pathway; AMP from adenine: step 1/1. In terms of biological role, catalyzes a salvage reaction resulting in the formation of AMP, that is energically less costly than de novo synthesis. This chain is Adenine phosphoribosyltransferase, found in Renibacterium salmoninarum (strain ATCC 33209 / DSM 20767 / JCM 11484 / NBRC 15589 / NCIMB 2235).